The sequence spans 449 residues: GTPase Der (449 aa).

2 consecutive EngA-type G domains span residues 4-174 (PIVA…PPKT) and 183-358 (LRVA…AQRQ). Residues 10–17 (GRPNVGKS), 57–61 (DTAGL), 126–129 (NKCD), 189–196 (GRPNVGKS), 236–240 (DTAGI), and 301–304 (NKWD) contribute to the GTP site. The KH-like domain maps to 359 to 444 (KRIPTSELNN…PIVIVFRSRE (86 aa)).

Belongs to the TRAFAC class TrmE-Era-EngA-EngB-Septin-like GTPase superfamily. EngA (Der) GTPase family. Associates with the 50S ribosomal subunit.

GTPase that plays an essential role in the late steps of ribosome biogenesis. The sequence is that of GTPase Der from Chloroflexus aggregans (strain MD-66 / DSM 9485).